The following is a 102-amino-acid chain: Protein RnfH (102 aa).

Belongs to the UPF0125 (RnfH) family.

This is Protein RnfH from Pseudomonas entomophila (strain L48).